Here is a 192-residue protein sequence, read N- to C-terminus: UPF0462 protein C4orf33 homolog (192 aa).

It belongs to the UPF0462 family.

This is UPF0462 protein C4orf33 homolog (D3Ertd751e) from Mus musculus (Mouse).